The chain runs to 230 residues: Orotidine 5'-phosphate decarboxylase (230 aa).

Substrate contacts are provided by residues D10, K32, 59–68, T119, R180, Q189, G209, and R210; that span reads DLKYHDIPNT. The Proton donor role is filled by K61.

Belongs to the OMP decarboxylase family. Type 1 subfamily. In terms of assembly, homodimer.

It carries out the reaction orotidine 5'-phosphate + H(+) = UMP + CO2. Its pathway is pyrimidine metabolism; UMP biosynthesis via de novo pathway; UMP from orotate: step 2/2. Its function is as follows. Catalyzes the decarboxylation of orotidine 5'-monophosphate (OMP) to uridine 5'-monophosphate (UMP). The polypeptide is Orotidine 5'-phosphate decarboxylase (Glaesserella parasuis serovar 5 (strain SH0165) (Haemophilus parasuis)).